Consider the following 295-residue polypeptide: MKQTTINHSVELVGIGLHKGVPVKLVLEPLGENQGIVFYRSDLGVNLPLKPENIVDTKMATVLGKDNARISTIEHLLSAVHAYGIDNLKISVDNEEIPIMDGSALTYCMLLDEAGIKELDAPKKVMEIKQAVEIRESDKFVKIEPDSQLSLNFTIDFNHPVIAKQAHHFVFSKTAYKEQVAKARTFGFLQEVNYLRSIGLAKGGSLNNCIVLDENSILNKEGLRCEKEFVCHKILDAMGDLMVLGMPVMGKYTSFSGSHKLNSMLVKAILADAKNYEVLIAADPAKEFALQKAFA.

3 residues coordinate Zn(2+): His75, His232, and Asp236. His259 serves as the catalytic Proton donor.

This sequence belongs to the LpxC family. The cofactor is Zn(2+).

The enzyme catalyses a UDP-3-O-[(3R)-3-hydroxyacyl]-N-acetyl-alpha-D-glucosamine + H2O = a UDP-3-O-[(3R)-3-hydroxyacyl]-alpha-D-glucosamine + acetate. It functions in the pathway glycolipid biosynthesis; lipid IV(A) biosynthesis; lipid IV(A) from (3R)-3-hydroxytetradecanoyl-[acyl-carrier-protein] and UDP-N-acetyl-alpha-D-glucosamine: step 2/6. Functionally, catalyzes the hydrolysis of UDP-3-O-myristoyl-N-acetylglucosamine to form UDP-3-O-myristoylglucosamine and acetate, the committed step in lipid A biosynthesis. This is UDP-3-O-acyl-N-acetylglucosamine deacetylase from Helicobacter pylori (strain ATCC 700392 / 26695) (Campylobacter pylori).